Here is a 623-residue protein sequence, read N- to C-terminus: uncharacterized protein (623 aa).

Residues 24-51 (RALVQKDELAQASQDVEDMRDCYDSLLN) adopt a coiled-coil conformation. 5 disordered regions span residues 148–170 (TRQR…QQLQ), 240–343 (FSGL…TTPP), 362–393 (ALPT…TKAI), 454–531 (SFSG…LGYS), and 585–607 (KKLG…PQAL). Over residues 243–259 (LEDDDGDDEIENNENDG) the composition is skewed to acidic residues. The span at 328-343 (VSQSAPLFPENRTTPP) shows a compositional bias: polar residues. Over residues 364-379 (PTPVETTRSPSSTTSP) the composition is skewed to low complexity. The segment covering 384–393 (VGSSNPTKAI) has biased composition (polar residues). Low complexity predominate over residues 484–495 (PVSKLPKVSSSP). The segment covering 496-506 (TASPTFVSTPK) has biased composition (polar residues). Positions 590–606 (PSPPLTPMSLIHPPPQA) are enriched in pro residues.

This is an uncharacterized protein from Arabidopsis thaliana (Mouse-ear cress).